Reading from the N-terminus, the 332-residue chain is Adenosine deaminase (332 aa).

2 residues coordinate Zn(2+): His-12 and His-14. Substrate contacts are provided by His-14, Asp-16, and Gly-170. A Zn(2+)-binding site is contributed by His-197. The Proton donor role is filled by Glu-200. A Zn(2+)-binding site is contributed by Asp-278. Asp-279 contacts substrate.

This sequence belongs to the metallo-dependent hydrolases superfamily. Adenosine and AMP deaminases family. Adenosine deaminase subfamily. Zn(2+) is required as a cofactor.

The catalysed reaction is adenosine + H2O + H(+) = inosine + NH4(+). It catalyses the reaction 2'-deoxyadenosine + H2O + H(+) = 2'-deoxyinosine + NH4(+). Functionally, catalyzes the hydrolytic deamination of adenosine and 2-deoxyadenosine. The polypeptide is Adenosine deaminase (Serratia proteamaculans (strain 568)).